The following is a 606-amino-acid chain: Elongation factor 4 (606 aa).

Residues 10 to 192 (ENIRNFSIIA…AIVQQLPAPK (183 aa)) enclose the tr-type G domain. Residues 22-27 (DHGKST) and 139-142 (NKID) each bind GTP.

This sequence belongs to the TRAFAC class translation factor GTPase superfamily. Classic translation factor GTPase family. LepA subfamily.

The protein resides in the cell membrane. The catalysed reaction is GTP + H2O = GDP + phosphate + H(+). In terms of biological role, required for accurate and efficient protein synthesis under certain stress conditions. May act as a fidelity factor of the translation reaction, by catalyzing a one-codon backward translocation of tRNAs on improperly translocated ribosomes. Back-translocation proceeds from a post-translocation (POST) complex to a pre-translocation (PRE) complex, thus giving elongation factor G a second chance to translocate the tRNAs correctly. Binds to ribosomes in a GTP-dependent manner. This Lawsonia intracellularis (strain PHE/MN1-00) protein is Elongation factor 4.